The sequence spans 457 residues: ATP synthase subunit beta (457 aa).

147–154 contacts ATP; it reads GGAGVGKT.

The protein belongs to the ATPase alpha/beta chains family. As to quaternary structure, F-type ATPases have 2 components, CF(1) - the catalytic core - and CF(0) - the membrane proton channel. CF(1) has five subunits: alpha(3), beta(3), gamma(1), delta(1), epsilon(1). CF(0) has three main subunits: a(1), b(2) and c(9-12). The alpha and beta chains form an alternating ring which encloses part of the gamma chain. CF(1) is attached to CF(0) by a central stalk formed by the gamma and epsilon chains, while a peripheral stalk is formed by the delta and b chains.

It localises to the cell inner membrane. The catalysed reaction is ATP + H2O + 4 H(+)(in) = ADP + phosphate + 5 H(+)(out). In terms of biological role, produces ATP from ADP in the presence of a proton gradient across the membrane. The catalytic sites are hosted primarily by the beta subunits. The polypeptide is ATP synthase subunit beta (Haemophilus ducreyi (strain 35000HP / ATCC 700724)).